The chain runs to 292 residues: Aquaporin PIP1-3/PIP1-4 (292 aa).

Residues 1–42 (MEGKEEDVRLGANKFSERQPIGTAAQGAGAGDDDKDYKEPPP) form a disordered region. The next 2 helical transmembrane spans lie at 61–81 (IAEF…VMGV) and 96–118 (IAWS…SGGH). An NPA 1 motif is present at residues 120 to 122 (NPA). A run of 3 helical transmembrane segments spans residues 139 to 159 (IFYI…VKGF), 181 to 201 (GDGL…VFSA), and 215 to 235 (ILAP…TIPI). Residues 241–243 (NPA) carry the NPA 2 motif. The chain crosses the membrane as a helical span at residues 263–283 (IFWVGPFIGAALAAIYHQVII).

The protein belongs to the MIP/aquaporin (TC 1.A.8) family. PIP (TC 1.A.8.11) subfamily.

The protein localises to the cell membrane. In terms of biological role, aquaporins facilitate the transport of water and small neutral solutes across cell membranes. The polypeptide is Aquaporin PIP1-3/PIP1-4 (PIP1-3) (Zea mays (Maize)).